The primary structure comprises 672 residues: ABC transporter G family member 21 (672 aa).

A compositionally biased stretch (polar residues) spans 1–35; that stretch reads MMPPNEQESSFPKTPSANRHETSPVQENRFSSPSH. Residues 1 to 59 are disordered; the sequence is MMPPNEQESSFPKTPSANRHETSPVQENRFSSPSHVNPCLDDDNDHDGPSHQSRQSSVL. Low complexity predominate over residues 50 to 59; it reads SHQSRQSSVL. The ABC transporter domain maps to 68-322; it reads LKFEELTYSI…FGSIGYQPGS (255 aa). Residue 117–124 coordinates ATP; it reads GPSGSGKT. One can recognise an ABC transmembrane type-2 domain in the interval 411 to 617; the sequence is MQFSVLLKRG…CYKLLVGVQY (207 aa). 6 helical membrane-spanning segments follow: residues 429 to 449, 460 to 480, 512 to 532, 543 to 563, 576 to 596, and 649 to 669; these read FSGL…LLWW, VGLL…NAIF, LPME…MGGL, LMIV…LGAI, VLML…PGFI, and WDVL…YLAL.

It belongs to the ABC transporter superfamily. ABCG family. Eye pigment precursor importer (TC 3.A.1.204) subfamily.

It localises to the membrane. The sequence is that of ABC transporter G family member 21 (ABCG21) from Arabidopsis thaliana (Mouse-ear cress).